We begin with the raw amino-acid sequence, 992 residues long: UPF0182 protein MT3285 (992 aa).

Transmembrane regions (helical) follow at residues 17 to 39 (RILIMIALGVIVLLLAGPRLIDA), 59 to 81 (LATRIVVCLVAGVVVGGIVFGGL), 113 to 135 (LVGIGIPAAIGLLAGIVAQSYWA), 169 to 191 (LMLSYMLVSVFLAFVANLVAHYI), 212 to 229 (LVSLVGVLVLLKAVAYWL), 255 to 277 (VLPAKLILMAIALICAAAVFSAI), and 284 to 306 (IPAIGLVLLLLSSLIVGAGWPLI). Positions 906–938 (PTEAAVPPSPAANPPPPASGPQPPPVTAAPPVP) are disordered. Pro residues predominate over residues 912–938 (PPSPAANPPPPASGPQPPPVTAAPPVP).

This sequence belongs to the UPF0182 family.

The protein resides in the cell membrane. The sequence is that of UPF0182 protein MT3285 from Mycobacterium tuberculosis (strain CDC 1551 / Oshkosh).